Consider the following 159-residue polypeptide: Putative transcriptional regulatory protein rrnAC0199 (159 aa).

It belongs to the Tfx family.

In terms of biological role, putative transcriptional regulator. This chain is Putative transcriptional regulatory protein rrnAC0199, found in Haloarcula marismortui (strain ATCC 43049 / DSM 3752 / JCM 8966 / VKM B-1809) (Halobacterium marismortui).